A 246-amino-acid polypeptide reads, in one-letter code: Carboxylesterase (246 aa).

S93 (nucleophile) is an active-site residue. Residues D192 and H222 each act as charge relay system in the active site.

This sequence belongs to the lipase/esterase LIP3/BchO family. As to quaternary structure, homodimer.

It carries out the reaction a carboxylic ester + H2O = an alcohol + a carboxylate + H(+). In terms of biological role, involved in the detoxification of xenobiotics. Shows maximal activity with C6 substrates, with gradually decreasing activity from C8 to C12 substrates. No activity for higher chain length substrates acids rather than long-chain ones. The sequence is that of Carboxylesterase (est) from Bacillus subtilis (strain 168).